The primary structure comprises 548 residues: Beta-lactamase-like protein 2 (548 aa).

An N-terminal signal peptide occupies residues 1-24; the sequence is MKIMNKQSITIFLIICFLINLILS. N-linked (GlcNAc...) asparagine glycosylation is found at Asn-237, Asn-258, Asn-443, and Asn-459.

This sequence belongs to the beta-lactamase family.

The protein localises to the secreted. This Dictyostelium discoideum (Social amoeba) protein is Beta-lactamase-like protein 2.